The primary structure comprises 598 residues: MSHEGSRQARDRGVTRSKAEKARPPTQPVPQVDIVPGRLNEAEWIAFMSLEEGEDVVGDILADLMTRVMECAFKVYLTQQCVPFTISQAREAMLQITEWRFLARDEGESAVAEDPTWGEDEEPLACTTDSWAQGSVPVLHTPAPVCVEEQFHNEEPGNPDQFLLGSSWDKESQKPTQPSEPSAEPKVTPRPTATLEAFEEAEPGDALEVPHGQEGSHMLAVPSKESLRSTAEGERVYSPQSSLKQPQVVRLQASEKESSFGSHLSLEDLYLCMPQPDAAGDRLSLQSKGQLHSSPIGSESHLGALTPAEPSAFQEPEVLGERPKHKTTTLRMDSSRLPRHWVRPVAEVLIPDLEVHPLEIYRGRPRRSQAGTATSACESQALSSRAPSKPHVSSPRFPLQRCATFRALGPDPSLNLAQTSPSFGSNVPFLSPGFRFLPRNPIPPDVASTPTPKLWPLAKWPSGWEREAEQLGELWAGRTRVPPQGQEPVEVTPLEEDSGWPLAAPQVLEATSQVLWKPMVISETMKLVPGVSMWNRGTQELLNPAVIRKEAEEGTPQAPEQQPIQTGVSKPQVIMKQIRNETPKAWLLPTKPVPHSGS.

Residues 1-23 (MSHEGSRQARDRGVTRSKAEKAR) show a composition bias toward basic and acidic residues. 3 disordered regions span residues 1–32 (MSHE…VPQV), 151–190 (FHNE…VTPR), and 222–241 (PSKE…SPQS). The span at 225-235 (ESLRSTAEGER) shows a compositional bias: basic and acidic residues. A phosphoserine mark is found at serine 238 and serine 242. Disordered regions lie at residues 366–396 (RRSQ…SSPR) and 551–571 (AEEG…VSKP). 2 stretches are compositionally biased toward polar residues: residues 369 to 386 (QAGT…SSRA) and 558 to 569 (APEQQPIQTGVS).

This is an uncharacterized protein from Mus musculus (Mouse).